We begin with the raw amino-acid sequence, 554 residues long: Developmental and secondary metabolism regulator ve-1 (554 aa).

Residues Gly-31–Arg-230 enclose the Velvet domain. Positions Leu-45 to Cys-50 match the Nuclear localization signal motif. Over residues Thr-166 to Glu-175 the composition is skewed to basic and acidic residues. 3 disordered regions span residues Thr-166 to Phe-190, Asp-232 to Leu-430, and Pro-465 to Lys-528. A compositionally biased stretch (polar residues) spans Arg-276–Asp-292. 2 stretches are compositionally biased toward pro residues: residues Ser-363–Gln-372 and Leu-485–Gln-494. The segment at Ser-455–Pro-487 is PEST. Basic and acidic residues predominate over residues Arg-500 to Lys-528.

It belongs to the velvet family. VeA subfamily. In terms of assembly, component of the heterotrimeric velvet complex composed of lae-1, ve-1 and vel-2; Ve-1 acting as a bridging protein between lae-1 and vel-2.

It is found in the nucleus. The protein localises to the cytoplasm. In terms of biological role, component of the velvet transcription factor complex that controls sexual/asexual developmental ratio in response to light, promoting sexual development in the darkness while stimulating asexual sporulation under illumination. The velvet complex hat acts as a global regulator for secondary metabolite gene expression. This is Developmental and secondary metabolism regulator ve-1 from Neurospora crassa (strain ATCC 24698 / 74-OR23-1A / CBS 708.71 / DSM 1257 / FGSC 987).